Reading from the N-terminus, the 231-residue chain is Heptaprenylglyceryl phosphate synthase (231 aa).

Sn-glycerol 1-phosphate is bound at residue K12. Mg(2+) contacts are provided by D14 and T40. Sn-glycerol 1-phosphate contacts are provided by residues 159-164, G189, and 209-210; these read YMEYSG and GN.

Belongs to the GGGP/HepGP synthase family. Group I subfamily. In terms of assembly, homodimer. Requires Mg(2+) as cofactor.

The catalysed reaction is sn-glycerol 1-phosphate + all-trans-heptaprenyl diphosphate = 3-heptaprenyl-sn-glycero-1-phosphate + diphosphate. The protein operates within membrane lipid metabolism; glycerophospholipid metabolism. Its function is as follows. Prenyltransferase that catalyzes in vivo the transfer of the heptaprenyl moiety of heptaprenyl pyrophosphate (HepPP; 35 carbon atoms) to the C3 hydroxyl of sn-glycerol-1-phosphate (G1P), producing heptaprenylglyceryl phosphate (HepGP). This reaction is an ether-bond-formation step in the biosynthesis of archaea-type G1P-based membrane lipids found in Bacillales. The polypeptide is Heptaprenylglyceryl phosphate synthase (Anoxybacillus flavithermus (strain DSM 21510 / WK1)).